The sequence spans 199 residues: MSSMEKNLFNLKFAAKELHRNAKKCEKEEKTEKAKIKKAIQKGNTEIARIHAENAIRQKNQGINFLRMSARVDAVAARVQTAVTMGKVTKSMAGVVKSMDTTLKSMNLEKISALMDKFEHQFETLDVQTQQMEDTMSNTTTLTTPQNQVDNLLHEMADEAGLDLNMELPQGQTGSVGTSVASTEQDELSQRLARLRDQV.

Coiled coils occupy residues 15–42 (AKEL…AIQK) and 178–199 (TSVA…RDQV). Residues 167-199 (ELPQGQTGSVGTSVASTEQDELSQRLARLRDQV) are disordered. A compositionally biased stretch (polar residues) spans 170 to 183 (QGQTGSVGTSVAST). The short motif at 186 to 196 (DELSQRLARLR) is the MIT-interacting motif element.

The protein belongs to the SNF7 family.

The protein localises to the cytoplasm. It is found in the cytosol. The protein resides in the endosome. Its subcellular location is the late endosome membrane. In terms of biological role, probable peripherally associated component of the endosomal sorting required for transport complex III (ESCRT-III) which is involved in multivesicular bodies (MVBs) formation and sorting of endosomal cargo proteins into MVBs. MVBs contain intraluminal vesicles (ILVs) that are generated by invagination and scission from the limiting membrane of the endosome and mostly are delivered to lysosomes enabling degradation of membrane proteins, such as stimulated growth factor receptors, lysosomal enzymes and lipids. This is Charged multivesicular body protein 1b (chmp1b) from Xenopus tropicalis (Western clawed frog).